The following is a 169-amino-acid chain: uncharacterized protein (169 aa).

One can recognise an HTH asnC-type domain in the interval 18-79 (LDRADVALLN…IVSPKAVGRP (62 aa)). A DNA-binding region (H-T-H motif) is located at residues 37 to 56 (SEELADKVGLSPTACQRRLK).

This is an uncharacterized protein from Sinorhizobium fredii (strain NBRC 101917 / NGR234).